Reading from the N-terminus, the 169-residue chain is Protein Flattop homolog (169 aa).

The tract at residues 53 to 169 (IPRSSRSPWG…SPKLATPEPC (117 aa)) is disordered. The segment covering 119 to 130 (VQASPRNASPLQ) has biased composition (polar residues).

It belongs to the Flattop family.

It localises to the cytoplasm. The protein resides in the cytoskeleton. It is found in the cilium basal body. Its subcellular location is the cell projection. The protein localises to the cilium. It localises to the apical cell membrane. In terms of biological role, acts as a regulator of cilium basal body docking and positioning in mono- and multiciliated cells. This chain is Protein Flattop homolog, found in Nematostella vectensis (Starlet sea anemone).